The sequence spans 103 residues: UPF0145 protein HH_1800 (103 aa).

It belongs to the UPF0145 family.

The protein is UPF0145 protein HH_1800 of Helicobacter hepaticus (strain ATCC 51449 / 3B1).